The following is a 228-amino-acid chain: 6-carboxyhexanoate--CoA ligase (228 aa).

This sequence belongs to the BioW family. As to quaternary structure, homodimer. The cofactor is Mg(2+).

The enzyme catalyses heptanedioate + ATP + CoA = 6-carboxyhexanoyl-CoA + AMP + diphosphate. It participates in metabolic intermediate metabolism; pimeloyl-CoA biosynthesis; pimeloyl-CoA from pimelate: step 1/1. Its function is as follows. Catalyzes the transformation of pimelate into pimeloyl-CoA with concomitant hydrolysis of ATP to AMP. This chain is 6-carboxyhexanoate--CoA ligase, found in Staphylococcus epidermidis (strain ATCC 12228 / FDA PCI 1200).